The chain runs to 177 residues: CASP-like protein 2U1 (177 aa).

The chain crosses the membrane as a helical span at residues 1 to 21; that stretch reads MVLRIVASLLSIAALVLMAKD. Over 22–48 the chain is Cytoplasmic; sequence KQVVYLNLAGEELTLEAKHSYVEAFVY. A helical membrane pass occupies residues 49 to 69; the sequence is LVYSNGLVAIYCFLLVFALVF. The Extracellular segment spans residues 70–80; the sequence is RLIDKAGCGKS. A helical membrane pass occupies residues 81-101; sequence AAWIIFLLDQGLAYVLLAAAA. Over 102 to 131 the chain is Cytoplasmic; it reads ASTEVAYVAKRGNNKVGWSEVCSTFGHFCN. A helical transmembrane segment spans residues 132–152; that stretch reads LVGVSIVITFISVLAMATLSV. Topologically, residues 153-177 are extracellular; that stretch reads MSARRLFKTYGPERKQISSNDAPAI.

It belongs to the Casparian strip membrane proteins (CASP) family. Homodimer and heterodimers.

The protein resides in the cell membrane. The chain is CASP-like protein 2U1 from Osmunda lancea (Fern).